The chain runs to 210 residues: Regulator of G-protein signaling 17 (210 aa).

Positions Met1 to Asn21 are disordered. The RGS domain occupies Asn84 to Val200. Tyr137 carries the post-translational modification Phosphotyrosine.

Interacts with GNAI1 and GNAQ. Interacts with GNAZ and GNAI2. Interacts with OPRM1. Forms a complex with mu-opioid receptors and G(alpha)z/i2 subunits, including GNAZ and GNAI2; the formation of this complex results in mu-opioid receptor desensitization. Interacts with HINT1. Post-translationally, N- and O-glycosylated in synapsomal membranes. Serine phosphorylated in synapsomal membranes. In terms of processing, sumoylated with SUMO1 and SUM02 in synaptosomes. The sumoylated forms act as a scaffold for sequestering mu-opioid receptor-activated G(alpha) subunits. Desumoylated by HINT1. Predominantly expressed in the cerebellum. Also expressed in the cortex and medulla. Weakly expressed in a number of peripheral tissues notably spleen, lung and leukocytes.

It localises to the membrane. The protein localises to the synapse. Its subcellular location is the synaptosome. It is found in the nucleus. The protein resides in the cytoplasm. Regulates G protein-coupled receptor signaling cascades, including signaling via muscarinic acetylcholine receptor CHRM2 and dopamine receptor DRD2. Inhibits signal transduction by increasing the GTPase activity of G protein alpha subunits, thereby driving them into their inactive GDP-bound form. Binds selectively to GNAZ and GNAI2 subunits, accelerates their GTPase activity and regulates their signaling activities. Negatively regulates mu-opioid receptor-mediated activation of the G-proteins. The polypeptide is Regulator of G-protein signaling 17 (RGS17) (Homo sapiens (Human)).